Here is a 188-residue protein sequence, read N- to C-terminus: MKQQANLIRAGQVIEHDGRRWTVLKQQIITPGKGGAFIQVEMRDLKTGNKTNERWRTADTVERLMTDNRDYTYSYTDGDNLVLMDGETFEQFLVPAELLGDQAPFLQDNMAVIVDLVEGDPVGIHLPATVTLEIVEADPVVKGQTASSSYKPAKLSNGVKVMVPPFIEAGERIVVRTEDSTYVERAKG.

The protein belongs to the elongation factor P family.

The protein localises to the cytoplasm. It functions in the pathway protein biosynthesis; polypeptide chain elongation. Its function is as follows. Involved in peptide bond synthesis. Stimulates efficient translation and peptide-bond synthesis on native or reconstituted 70S ribosomes in vitro. Probably functions indirectly by altering the affinity of the ribosome for aminoacyl-tRNA, thus increasing their reactivity as acceptors for peptidyl transferase. The polypeptide is Elongation factor P (Acidiphilium cryptum (strain JF-5)).